The sequence spans 149 residues: UPF0756 membrane protein BBR47_32760 (149 aa).

A run of 5 helical transmembrane segments spans residues 3 to 23 (WISI…NATV), 48 to 68 (HGLQ…LASG), 85 to 105 (LLAV…TVLM), 106 to 126 (SQNP…VTFF), and 128 to 148 (GVAV…QFLP).

Belongs to the UPF0756 family.

It localises to the cell membrane. The protein is UPF0756 membrane protein BBR47_32760 of Brevibacillus brevis (strain 47 / JCM 6285 / NBRC 100599).